A 77-amino-acid chain; its full sequence is Small integral membrane protein 7 (77 aa).

Positions 1-17 (MIGDLLIFGTLLMNAGA) are cleaved as a signal peptide. Residues 18 to 55 (VLNFKLKKRETQSQGFGDDSGSSSTGENIREFLLSLRY) lie on the Extracellular side of the membrane. Residues 56 to 76 (FRIFIALWNIFMMFCMIVLFG) form a helical membrane-spanning segment. A topological domain (cytoplasmic) is located at residue serine 77.

Belongs to the SMIM7 family.

Its subcellular location is the membrane. This chain is Small integral membrane protein 7 (smim7), found in Danio rerio (Zebrafish).